A 310-amino-acid chain; its full sequence is Olfactory receptor 5P53 (310 aa).

Residues 1–25 lie on the Extracellular side of the membrane; the sequence is MEAENHTTVAELIILGLTEDPKLCI. Residue Asn-5 is glycosylated (N-linked (GlcNAc...) asparagine). Residues 26 to 46 traverse the membrane as a helical segment; the sequence is VFFVIFLGVYIVTLVGNISII. Residues 47-54 lie on the Cytoplasmic side of the membrane; sequence TLIRISSQ. The helical transmembrane segment at 55-75 threads the bilayer; it reads LHTPMYLFLSHLAFVDILYST. The Extracellular segment spans residues 76 to 99; sequence SVSVIMHMELLGHGLALPVAACAA. The cysteines at positions 97 and 189 are disulfide-linked. The helical transmembrane segment at 100-120 threads the bilayer; that stretch reads QLCITVSFGSAECFLLAAMAY. The Cytoplasmic portion of the chain corresponds to 121-133; sequence DRYVAICSPLLYS. Residues 134 to 154 traverse the membrane as a helical segment; that stretch reads TLMSPRVCFLLLGMSYVGGCM. The Extracellular portion of the chain corresponds to 155-196; it reads NGWTFTGCLLSLSFCGPNQIDHFFCDFSPLLKLSCSDVSIIG. A helical membrane pass occupies residues 197–217; sequence IIPSISSGSIIVVTVFVIAVS. Residues 218–237 lie on the Cytoplasmic side of the membrane; the sequence is YIYILITILNMRSTEGRHKA. The helical transmembrane segment at 238-258 threads the bilayer; sequence FSTCTSHLTAVTLYYGTITFI. Residues 259 to 271 are Extracellular-facing; that stretch reads YVMPKSNYSTEQN. An N-linked (GlcNAc...) asparagine glycan is attached at Asn-265. Residues 272 to 292 form a helical membrane-spanning segment; sequence KVLSVFYTVVIPMLNPLIYSL. Residues 293 to 310 lie on the Cytoplasmic side of the membrane; that stretch reads RNRDVKEALRKATVRVYS.

It belongs to the G-protein coupled receptor 1 family.

The protein resides in the cell membrane. Functionally, potential odorant receptor. The protein is Olfactory receptor 5P53 of Mus musculus (Mouse).